A 548-amino-acid polypeptide reads, in one-letter code: CBS domain-containing protein CBSCBSPB4 (548 aa).

A compositionally biased stretch (polar residues) spans 1 to 18 (MANQGGPSRKSLSFSGHS). Residues 1–58 (MANQGGPSRKSLSFSGHSFQGRKKASENEGGGGGGSDLLPRRSLTSSRSSISLSGERS) form a disordered region. A Phosphoserine modification is found at Ser18. Residues 37–56 (DLLPRRSLTSSRSSISLSGE) are compositionally biased toward low complexity. CBS domains follow at residues 63 to 126 (VKRL…NLEE), 133 to 190 (MTKN…ERSV), 233 to 293 (IIPE…LPQE), and 301 to 358 (MTPN…AGST). Residues 411-498 (PNTFAFKLQD…KGLKLHLDYT (88 aa)) enclose the PB1 domain. Residues 521 to 543 (AAAYKTVAAGAALAAGLGVLVYL) traverse the membrane as a helical segment.

The protein resides in the membrane. This is CBS domain-containing protein CBSCBSPB4 (CBSCBSPB4) from Arabidopsis thaliana (Mouse-ear cress).